A 525-amino-acid polypeptide reads, in one-letter code: Asparagine synthetase domain-containing protein YML096W (525 aa).

Cysteine 2 serves as the catalytic For GATase activity. In terms of domain architecture, Glutamine amidotransferase type-2 spans 2–209; the sequence is CGILLHYCPN…LNSNQRSHLP (208 aa). Residues 210–523 enclose the Asparagine synthetase domain; it reads YEVTSEIDLN…GTDLLKENRN (314 aa). The interval 503-525 is disordered; that stretch reads SAKMTKDGNKHGTDLLKENRNCS. Residues 506–525 are compositionally biased toward basic and acidic residues; that stretch reads MTKDGNKHGTDLLKENRNCS.

The protein resides in the cytoplasm. The sequence is that of Asparagine synthetase domain-containing protein YML096W from Saccharomyces cerevisiae (strain ATCC 204508 / S288c) (Baker's yeast).